We begin with the raw amino-acid sequence, 49 residues long: uncharacterized protein (49 aa).

This is an uncharacterized protein from Bacillus subtilis (strain 168).